Reading from the N-terminus, the 491-residue chain is Chromosomal replication initiator protein DnaA (491 aa).

The segment at 1 to 86 is domain I, interacts with DnaA modulators; that stretch reads MTDELNSQFT…VEALSRRLGE (86 aa). The domain II stretch occupies residues 86 to 150; the sequence is ENVELGVRIA…GADKAETPDT (65 aa). Positions 151-367 are domain III, AAA+ region; the sequence is SLNARYTFES…GALIRVTAFA (217 aa). ATP is bound by residues glycine 195, glycine 197, lysine 198, and threonine 199. A domain IV, binds dsDNA region spans residues 368 to 491; that stretch reads SLNKSPIELS…TARIRQRSRH (124 aa).

This sequence belongs to the DnaA family. Oligomerizes as a right-handed, spiral filament on DNA at oriC.

Its subcellular location is the cytoplasm. Functionally, plays an essential role in the initiation and regulation of chromosomal replication. ATP-DnaA binds to the origin of replication (oriC) to initiate formation of the DNA replication initiation complex once per cell cycle. Binds the DnaA box (a 9 base pair repeat at the origin) and separates the double-stranded (ds)DNA. Forms a right-handed helical filament on oriC DNA; dsDNA binds to the exterior of the filament while single-stranded (ss)DNA is stabiized in the filament's interior. The ATP-DnaA-oriC complex binds and stabilizes one strand of the AT-rich DNA unwinding element (DUE), permitting loading of DNA polymerase. After initiation quickly degrades to an ADP-DnaA complex that is not apt for DNA replication. Binds acidic phospholipids. The sequence is that of Chromosomal replication initiator protein DnaA from Mycobacteroides abscessus (strain ATCC 19977 / DSM 44196 / CCUG 20993 / CIP 104536 / JCM 13569 / NCTC 13031 / TMC 1543 / L948) (Mycobacterium abscessus).